We begin with the raw amino-acid sequence, 108 residues long: Nucleoid-associated protein CHAB381_0200 (108 aa).

Belongs to the YbaB/EbfC family. In terms of assembly, homodimer.

The protein resides in the cytoplasm. It localises to the nucleoid. Its function is as follows. Binds to DNA and alters its conformation. May be involved in regulation of gene expression, nucleoid organization and DNA protection. This Campylobacter hominis (strain ATCC BAA-381 / DSM 21671 / CCUG 45161 / LMG 19568 / NCTC 13146 / CH001A) protein is Nucleoid-associated protein CHAB381_0200.